The sequence spans 184 residues: ADP-ribosylation factor-like protein 3 (184 aa).

A lipid anchor (N-myristoyl glycine) is attached at Gly2. GTP-binding positions include 24-31 (GLDNAGKT), 68-72 (DIGGQ), and 127-130 (NKQD).

It belongs to the small GTPase superfamily. Arf family.

The protein localises to the golgi apparatus. In terms of biological role, GTP-binding protein that may be involved in protein trafficking; may modulate vesicle budding and uncoating within the Golgi apparatus. In Caenorhabditis elegans, this protein is ADP-ribosylation factor-like protein 3 (arl-3).